Consider the following 184-residue polypeptide: Crossover junction endodeoxyribonuclease RuvC (184 aa).

Active-site residues include Asp11, Glu73, and Asp147. 3 residues coordinate Mg(2+): Asp11, Glu73, and Asp147.

Belongs to the RuvC family. As to quaternary structure, homodimer which binds Holliday junction (HJ) DNA. The HJ becomes 2-fold symmetrical on binding to RuvC with unstacked arms; it has a different conformation from HJ DNA in complex with RuvA. In the full resolvosome a probable DNA-RuvA(4)-RuvB(12)-RuvC(2) complex forms which resolves the HJ. Requires Mg(2+) as cofactor.

The protein resides in the cytoplasm. It catalyses the reaction Endonucleolytic cleavage at a junction such as a reciprocal single-stranded crossover between two homologous DNA duplexes (Holliday junction).. Functionally, the RuvA-RuvB-RuvC complex processes Holliday junction (HJ) DNA during genetic recombination and DNA repair. Endonuclease that resolves HJ intermediates. Cleaves cruciform DNA by making single-stranded nicks across the HJ at symmetrical positions within the homologous arms, yielding a 5'-phosphate and a 3'-hydroxyl group; requires a central core of homology in the junction. The consensus cleavage sequence is 5'-(A/T)TT(C/G)-3'. Cleavage occurs on the 3'-side of the TT dinucleotide at the point of strand exchange. HJ branch migration catalyzed by RuvA-RuvB allows RuvC to scan DNA until it finds its consensus sequence, where it cleaves and resolves the cruciform DNA. The protein is Crossover junction endodeoxyribonuclease RuvC of Neisseria gonorrhoeae (strain ATCC 700825 / FA 1090).